A 102-amino-acid polypeptide reads, in one-letter code: Small ribosomal subunit protein uS10 (102 aa).

It belongs to the universal ribosomal protein uS10 family. In terms of assembly, part of the 30S ribosomal subunit.

In terms of biological role, involved in the binding of tRNA to the ribosomes. The polypeptide is Small ribosomal subunit protein uS10 (Desulforamulus reducens (strain ATCC BAA-1160 / DSM 100696 / MI-1) (Desulfotomaculum reducens)).